Here is a 594-residue protein sequence, read N- to C-terminus: UvrABC system protein C (594 aa).

Positions 14 to 91 (DQPGCYLMKD…IKKHDPKYNI (78 aa)) constitute a GIY-YIG domain. One can recognise a UVR domain in the interval 196 to 231 (KEVRSELETKMYEASEKLEFERAKELRDQIAHIDAI).

It belongs to the UvrC family. Interacts with UvrB in an incision complex.

The protein localises to the cytoplasm. The UvrABC repair system catalyzes the recognition and processing of DNA lesions. UvrC both incises the 5' and 3' sides of the lesion. The N-terminal half is responsible for the 3' incision and the C-terminal half is responsible for the 5' incision. The protein is UvrABC system protein C of Bacillus thuringiensis (strain Al Hakam).